Consider the following 274-residue polypeptide: Protein RecA (274 aa).

Residue 43–50 (GPESSGKT) coordinates ATP.

This sequence belongs to the RecA family.

Its subcellular location is the cytoplasm. Can catalyze the hydrolysis of ATP in the presence of single-stranded DNA, the ATP-dependent uptake of single-stranded DNA by duplex DNA, and the ATP-dependent hybridization of homologous single-stranded DNAs. It interacts with LexA causing its activation and leading to its autocatalytic cleavage. This is Protein RecA from Neisseria pharyngis.